A 590-amino-acid chain; its full sequence is PWWP domain-containing protein 2B (590 aa).

4 disordered regions span residues 52–110 (APLP…PPLP), 182–347 (KSTL…EHEP), 360–398 (YLRD…PQGP), and 426–467 (DSLD…TVPP). Position 84 is a phosphoserine (Ser84). Pro residues predominate over residues 99–110 (PEPPPPLVPPLP). Phosphoserine occurs at positions 186 and 206. Residues 208 to 217 (PDRELRKPEE) show a composition bias toward basic and acidic residues. Phosphoserine is present on Ser250. The span at 296-305 (VLDRESRDRP) shows a compositional bias: basic and acidic residues. The segment covering 376–385 (GLADLSSGSS) has biased composition (low complexity). Ser447 is subject to Phosphoserine. Residues 490–550 (VGDIVWGKIH…ISKLSPFSEF (61 aa)) form the PWWP domain.

Component of a MTA1-specific subcomplex of the NuRD complex composed of PWWP2B, MTA1 and HDAC1 but does not contain CHD4 and MBD3. Interacts with MTA1 and HDAC1. Interacts with MTA2, MTA3, HDAC2, RBBP4, RBBP7, BRCC3 and ZNF516. Does not interact with CHD4 and MBD3. Deubiquitinated by BRCC3; leading to its stabilization.

Its function is as follows. Chromatin-binding protein that acts as an adapter between distinct nucleosome components (H3K36me3 or H2A.Z) and chromatin-modifying complexes, contributing to the regulation of the levels of histone acetylation at actively transcribed genes. Competes with CHD4 and MBD3 for interaction with MTA1 to form a NuRD subcomplex, preventing the formation of full NuRD complex (containing CHD4 and MBD3), leading to recruitment of HDACs to gene promoters resulting in turn in the deacetylation of nearby H3K27 and H2A.Z. Plays a role in facilitating transcriptional elongation through regulation of histone acetylation. Negatively regulates brown adipocyte thermogenesis by interacting with and stabilizing HDAC1 at the UCP1 gene promoter, thereby promoting histone deacetylation at the promoter leading to the repression of UCP1 expression. This Homo sapiens (Human) protein is PWWP domain-containing protein 2B (PWWP2B).